Consider the following 374-residue polypeptide: Mitochondrial inner membrane protein oxa1-1 (374 aa).

A helical membrane pass occupies residues 77 to 97; the sequence is TINVYAGAPWWVSIILTTLGV. The Mitochondrial intermembrane portion of the chain corresponds to 98–159; it reads RLALTPVMIA…GIYLKHNVNP (62 aa). The helical transmembrane segment at 160 to 180 threads the bilayer; sequence FAIFILPLTQSAVFFSFFYAI. Over 181 to 242 the chain is Mitochondrial matrix; that stretch reads RKMSRLSVDG…TIGNSTNWRT (62 aa). Residues 243 to 263 traverse the membrane as a helical segment; that stretch reads FFFLCCLLSPLLTAKLPAAIF. The Mitochondrial intermembrane portion of the chain corresponds to 264–374; the sequence is MYWIPSSLFN…SKKNSKKQSN (111 aa).

This sequence belongs to the OXA1/ALB3/YidC family.

The protein localises to the mitochondrion inner membrane. Required for the insertion of integral membrane proteins into the mitochondrial inner membrane. Essential for the activity and assembly of cytochrome c oxidase. Not essential for viability, while oxa102 is essential. When both genes are deleted the cell is non-viable, suggesting that oxa101 act as a back-up for oxa102. This Schizosaccharomyces pombe (strain 972 / ATCC 24843) (Fission yeast) protein is Mitochondrial inner membrane protein oxa1-1 (oxa101).